Consider the following 567-residue polypeptide: MKKVPSDLEIAQAHEMIPIAEIAKNIGLGEDDIDLYGKYKAKISLDVLRKFNDRAMGKLIDITAITPTPLGEGKTVTTIGLCQGLGKIGKKVITTLRQPSMGPVFGIKGGAAGGGYSQVVPMEDINIHFTGDIHAVEAANNLLAAMIDTSILLGNPLNIDPMTVMWNRVLDTNDRALRDIVVGLGGKENGYPRQTSFDMAVASEVMAILALAENLHDLRQRLGRIIVAYTYDGKPVTAEDLKAAGAMTVIMKEALKPNLVQTLEGQACIMHAGPFANIAHGNNSVLADKIALNLADYVVTESGFGSDLGMEKFMDIKCRQSGLRPSCVVITCTIRALKMHGGLGNVVAGKPLPEELTRENLPALEKGCANLAHHIKVASYYGVPVVVSINRFTPDTDAEVDLVRKKALEAGALGAYPITVWAEGGEGAIELAEAVVAACEKTADFQLLYPDNLSIKEKIEVLATKVYNADGVVFEPLAERKIKQFEDLGLGHLPICMAKTHLSISHDPAMKGLPKNYIFPIRDIRASVGAGFLYPLAGAMRTMPGLGSKPAAHNVDIDEYGRTVGLF.

68–75 is a binding site for ATP; it reads TPLGEGKT.

It belongs to the formate--tetrahydrofolate ligase family.

It catalyses the reaction (6S)-5,6,7,8-tetrahydrofolate + formate + ATP = (6R)-10-formyltetrahydrofolate + ADP + phosphate. It participates in one-carbon metabolism; tetrahydrofolate interconversion. This Desulforamulus reducens (strain ATCC BAA-1160 / DSM 100696 / MI-1) (Desulfotomaculum reducens) protein is Formate--tetrahydrofolate ligase.